The chain runs to 437 residues: Epsilon-sarcoglycan (437 aa).

Topologically, residues 1 to 317 are extracellular; the sequence is MLLFWWWELG…LKSRDYYTDF (317 aa). Asn-200 carries an N-linked (GlcNAc...) asparagine glycan. A helical membrane pass occupies residues 318–338; it reads LVTLAVPSAVALVLFLILAYI. Topologically, residues 339–437 are cytoplasmic; sequence MCCRREGVEK…QPQTTGKWYP (99 aa).

It belongs to the sarcoglycan alpha/epsilon family. In terms of processing, N-glycosylated. Ubiquitinated, leading to its degradation by the proteasome. Identified in all tissues tested. Expression highest in lung and placenta, moderate in brain, heart and skeletal muscle, low in kidney and liver. Also detected in embryo.

It is found in the cell membrane. The protein resides in the sarcolemma. The protein localises to the golgi apparatus. It localises to the cell projection. Its subcellular location is the dendrite. It is found in the cytoplasm. The protein resides in the cytoskeleton. Component of the sarcoglycan complex, a subcomplex of the dystrophin-glycoprotein complex which forms a link between the F-actin cytoskeleton and the extracellular matrix. The chain is Epsilon-sarcoglycan (Sgce) from Mus musculus (Mouse).